Reading from the N-terminus, the 210-residue chain is Chloramphenicol acetyltransferase (210 aa).

The active site involves histidine 79.

Belongs to the transferase hexapeptide repeat family.

It carries out the reaction chloramphenicol + acetyl-CoA = chloramphenicol 3-acetate + CoA. Functionally, this enzyme is an effector of chloramphenicol resistance in bacteria. The polypeptide is Chloramphenicol acetyltransferase (catB2) (Escherichia coli).